Reading from the N-terminus, the 512-residue chain is Phosphoenolpyruvate carboxylase (512 aa).

This sequence belongs to the PEPCase type 2 family. Homotetramer. Mg(2+) serves as cofactor.

It catalyses the reaction oxaloacetate + phosphate = phosphoenolpyruvate + hydrogencarbonate. Catalyzes the irreversible beta-carboxylation of phosphoenolpyruvate (PEP) to form oxaloacetate (OAA), a four-carbon dicarboxylic acid source for the tricarboxylic acid cycle. The sequence is that of Phosphoenolpyruvate carboxylase from Caldivirga maquilingensis (strain ATCC 700844 / DSM 13496 / JCM 10307 / IC-167).